Here is a 173-residue protein sequence, read N- to C-terminus: Translation initiation factor IF-3 (173 aa).

It belongs to the IF-3 family. In terms of assembly, monomer.

Its subcellular location is the cytoplasm. IF-3 binds to the 30S ribosomal subunit and shifts the equilibrium between 70S ribosomes and their 50S and 30S subunits in favor of the free subunits, thus enhancing the availability of 30S subunits on which protein synthesis initiation begins. The sequence is that of Translation initiation factor IF-3 from Bartonella bacilliformis (strain ATCC 35685 / KC583 / Herrer 020/F12,63).